A 27-amino-acid polypeptide reads, in one-letter code: Conotoxin flf14b (27 aa).

2 cysteine pairs are disulfide-bonded: cysteine 6-cysteine 26 and cysteine 10-cysteine 22.

As to expression, expressed by the venom duct.

It localises to the secreted. The protein is Conotoxin flf14b of Conus anabathrum floridanus (Florida cone).